A 551-amino-acid chain; its full sequence is (6-4)DNA photolyase (551 aa).

Residues 13–157 (AAAMVWFRKG…DVFSPVSHTL (145 aa)) form the Photolyase/cryptochrome alpha/beta domain. Glutamate 254 is a binding site for phosphate. Residues lysine 255, 268-272 (TTVLS), 309-313 (QLLWR), 372-375 (WMHH), arginine 378, 407-409 (DSD), and asparagine 413 contribute to the FAD site. Tryptophan 312 is a binding site for DNA. Residues 374 to 379 (HHLARH) are interaction with DNA. Tryptophan 419 contributes to the DNA binding site. A disordered region spans residues 508–551 (YASNRLDDDKPDKGKSSNSSRRKLSAGSQVTPNSSKTKQLKRSS). Residues 512–522 (RLDDDKPDKGK) show a composition bias toward basic and acidic residues. Positions 533-544 (AGSQVTPNSSKT) are enriched in polar residues.

It belongs to the DNA photolyase class-1 family. The cofactor is FAD.

The enzyme catalyses (6-4) photoproduct (in DNA) = 2 pyrimidine residues (in DNA).. Involved in repair of UV radiation-induced DNA damage. Catalyzes the photoreactivation of pyrimidine [6-4] pyrimidone photoproduct (6-4 products). The polypeptide is (6-4)DNA photolyase (UVR3) (Oryza sativa subsp. japonica (Rice)).